The following is a 203-amino-acid chain: Shikimate kinase (203 aa).

38–43 (GAGKST) is a binding site for ATP. Residue Ser-42 coordinates Mg(2+). The substrate site is built by Asp-60, Arg-84, and Gly-106. An ATP-binding site is contributed by Arg-144. A substrate-binding site is contributed by Arg-163.

It belongs to the shikimate kinase family. As to quaternary structure, monomer. It depends on Mg(2+) as a cofactor.

It localises to the cytoplasm. It catalyses the reaction shikimate + ATP = 3-phosphoshikimate + ADP + H(+). The protein operates within metabolic intermediate biosynthesis; chorismate biosynthesis; chorismate from D-erythrose 4-phosphate and phosphoenolpyruvate: step 5/7. Its function is as follows. Catalyzes the specific phosphorylation of the 3-hydroxyl group of shikimic acid using ATP as a cosubstrate. This Rhodopseudomonas palustris (strain ATCC BAA-98 / CGA009) protein is Shikimate kinase.